Consider the following 86-residue polypeptide: Large ribosomal subunit protein bL27 (86 aa).

A disordered region spans residues 1–21 (MAHKKGASSSRNGRDSAAQRL).

This sequence belongs to the bacterial ribosomal protein bL27 family.

The polypeptide is Large ribosomal subunit protein bL27 (rpmA) (Mycobacterium tuberculosis (strain CDC 1551 / Oshkosh)).